A 195-amino-acid chain; its full sequence is Glucagon family neuropeptides (195 aa).

The signal sequence occupies residues 1-20 (MAKSSRATLALLIYGILMRY). Residues 21 to 82 (SQCTPIGMGF…YYPPERRAET (62 aa)) constitute a propeptide that is removed on maturation. Positions 113–132 (VGEEEEDEEDSEPLSKRHSD) are disordered. Over residues 115-124 (EEEEDEEDSE) the composition is skewed to acidic residues. Lysine 167 is modified (lysine amide). Residues 171–195 (LVVPSVWTGIRDTVIITPEKRGKRY) constitute a propeptide that is removed on maturation.

The protein belongs to the glucagon family. As to expression, brain, testis, ovary and stomach. Not pancreas, pituitary, muscle and liver.

It is found in the secreted. In terms of biological role, primary role of GHRH is to release GH from the pituitary. Functionally, PACAP plays pivotal roles as a neurotransmitter and/or a neuromodulator. The protein is Glucagon family neuropeptides of Clarias macrocephalus (Bighead catfish).